The chain runs to 32 residues: NGWNENKNFILLGAVTWAILVFIVGSLNSYVI.

Residues 9–31 (FILLGAVTWAILVFIVGSLNSYV) traverse the membrane as a helical segment.

This sequence belongs to the PsbZ family. As to quaternary structure, PSII is composed of 1 copy each of membrane proteins PsbA, PsbB, PsbC, PsbD, PsbE, PsbF, PsbH, PsbI, PsbJ, PsbK, PsbL, PsbM, PsbT, PsbY, PsbZ, Psb30/Ycf12, at least 3 peripheral proteins of the oxygen-evolving complex and a large number of cofactors. It forms dimeric complexes.

The protein resides in the plastid. The protein localises to the chloroplast thylakoid membrane. Functionally, may control the interaction of photosystem II (PSII) cores with the light-harvesting antenna, regulates electron flow through the 2 photosystem reaction centers. PSII is a light-driven water plastoquinone oxidoreductase, using light energy to abstract electrons from H(2)O, generating a proton gradient subsequently used for ATP formation. This chain is Photosystem II reaction center protein Z, found in Euglena stellata.